We begin with the raw amino-acid sequence, 148 residues long: MKVILQQDVKNLGKKGDIVDIAEGYGRNYVLPRGLAIEATPANLKNLERLKANEAKKKEQELMDAKELGAKLSGITVKVRSKAGEGGRLFGAVTNKEIAETVEKQFGLKVDKRKYELKQPIKTLGHYPITVKIHPAVSAELKVEVVSE.

Belongs to the bacterial ribosomal protein bL9 family.

Binds to the 23S rRNA. This Heliobacterium modesticaldum (strain ATCC 51547 / Ice1) protein is Large ribosomal subunit protein bL9.